A 119-amino-acid chain; its full sequence is Large ribosomal subunit protein bL20 (119 aa).

This sequence belongs to the bacterial ribosomal protein bL20 family.

Functionally, binds directly to 23S ribosomal RNA and is necessary for the in vitro assembly process of the 50S ribosomal subunit. It is not involved in the protein synthesizing functions of that subunit. This chain is Large ribosomal subunit protein bL20, found in Bradyrhizobium sp. (strain BTAi1 / ATCC BAA-1182).